The following is a 180-amino-acid chain: Hypoxanthine-guanine phosphoribosyltransferase (180 aa).

Diphosphate is bound by residues Lys43 and Gly44. Positions 99 and 100 each coordinate Mg(2+). Asp103 functions as the Proton acceptor in the catalytic mechanism. GMP-binding positions include Lys131, 152–153 (FV), and Asp159. Arg165 lines the diphosphate pocket.

It belongs to the purine/pyrimidine phosphoribosyltransferase family. Mg(2+) serves as cofactor.

The protein localises to the cytoplasm. The catalysed reaction is IMP + diphosphate = hypoxanthine + 5-phospho-alpha-D-ribose 1-diphosphate. It catalyses the reaction GMP + diphosphate = guanine + 5-phospho-alpha-D-ribose 1-diphosphate. It functions in the pathway purine metabolism; IMP biosynthesis via salvage pathway; IMP from hypoxanthine: step 1/1. It participates in purine metabolism; GMP biosynthesis via salvage pathway; GMP from guanine: step 1/1. Purine salvage pathway enzyme that catalyzes the transfer of the ribosyl-5-phosphate group from 5-phospho-alpha-D-ribose 1-diphosphate (PRPP) to the N9 position of the 6-oxopurines hypoxanthine and guanine to form the corresponding ribonucleotides IMP (inosine 5'-monophosphate) and GMP (guanosine 5'-monophosphate), with the release of PPi. This is Hypoxanthine-guanine phosphoribosyltransferase (hprT) from Bacillus subtilis (strain 168).